We begin with the raw amino-acid sequence, 132 residues long: U10-hexatoxin-Hi1a (132 aa).

The signal sequence occupies residues 1–20; it reads MKGFIVFSLSLCLVFTVCLA. The propeptide occupies 21–30; the sequence is EDELMKEAVR.

In terms of processing, contains 5 disulfide bonds. In terms of tissue distribution, expressed by the venom gland.

The protein localises to the secreted. In terms of biological role, probable ion channel inhibitor. The protein is U10-hexatoxin-Hi1a of Hadronyche infensa (Fraser island funnel-web spider).